The following is a 152-amino-acid chain: Transcriptional regulator MraZ (152 aa).

2 consecutive SpoVT-AbrB domains span residues 5–52 (LNPI…THPQ) and 81–124 (ATEV…GKSQ).

Belongs to the MraZ family. As to quaternary structure, forms oligomers.

Its subcellular location is the cytoplasm. It is found in the nucleoid. This is Transcriptional regulator MraZ from Coxiella burnetii (strain Dugway 5J108-111).